Consider the following 454-residue polypeptide: Bifunctional protein GlmU (454 aa).

Positions 1 to 231 (MSRPTVSLIV…EAETLGVNTR (231 aa)) are pyrophosphorylase. Residues 11–14 (LAAG), K25, Q78, 83–84 (GT), 106–108 (YGD), G143, E157, N172, and N229 each bind UDP-N-acetyl-alpha-D-glucosamine. D108 is a Mg(2+) binding site. N229 serves as a coordination point for Mg(2+). The segment at 232-252 (AQLAAAEAEFQRRARAAALED) is linker. Residues 253-454 (GVTLTAPDTV…ARDASKKGTN (202 aa)) form an N-acetyltransferase region. UDP-N-acetyl-alpha-D-glucosamine contacts are provided by R318 and K336. The Proton acceptor role is filled by H348. Residues Y351 and N362 each contribute to the UDP-N-acetyl-alpha-D-glucosamine site. Acetyl-CoA contacts are provided by residues A365, 371–372 (NY), S390, S408, and R425.

In the N-terminal section; belongs to the N-acetylglucosamine-1-phosphate uridyltransferase family. This sequence in the C-terminal section; belongs to the transferase hexapeptide repeat family. Homotrimer. It depends on Mg(2+) as a cofactor.

It localises to the cytoplasm. It catalyses the reaction alpha-D-glucosamine 1-phosphate + acetyl-CoA = N-acetyl-alpha-D-glucosamine 1-phosphate + CoA + H(+). The catalysed reaction is N-acetyl-alpha-D-glucosamine 1-phosphate + UTP + H(+) = UDP-N-acetyl-alpha-D-glucosamine + diphosphate. It functions in the pathway nucleotide-sugar biosynthesis; UDP-N-acetyl-alpha-D-glucosamine biosynthesis; N-acetyl-alpha-D-glucosamine 1-phosphate from alpha-D-glucosamine 6-phosphate (route II): step 2/2. Its pathway is nucleotide-sugar biosynthesis; UDP-N-acetyl-alpha-D-glucosamine biosynthesis; UDP-N-acetyl-alpha-D-glucosamine from N-acetyl-alpha-D-glucosamine 1-phosphate: step 1/1. The protein operates within bacterial outer membrane biogenesis; LPS lipid A biosynthesis. Functionally, catalyzes the last two sequential reactions in the de novo biosynthetic pathway for UDP-N-acetylglucosamine (UDP-GlcNAc). The C-terminal domain catalyzes the transfer of acetyl group from acetyl coenzyme A to glucosamine-1-phosphate (GlcN-1-P) to produce N-acetylglucosamine-1-phosphate (GlcNAc-1-P), which is converted into UDP-GlcNAc by the transfer of uridine 5-monophosphate (from uridine 5-triphosphate), a reaction catalyzed by the N-terminal domain. This Cereibacter sphaeroides (strain ATCC 17025 / ATH 2.4.3) (Rhodobacter sphaeroides) protein is Bifunctional protein GlmU.